The primary structure comprises 268 residues: NH(3)-dependent NAD(+) synthetase (268 aa).

Residue glycine 45–serine 52 coordinates ATP. Aspartate 51 provides a ligand contact to Mg(2+). Arginine 129 contacts deamido-NAD(+). ATP is bound at residue threonine 149. Glutamate 154 contributes to the Mg(2+) binding site. Deamido-NAD(+) contacts are provided by lysine 162 and aspartate 169. Positions 178 and 200 each coordinate ATP. Histidine 260–lysine 261 lines the deamido-NAD(+) pocket.

Belongs to the NAD synthetase family. As to quaternary structure, homodimer.

The enzyme catalyses deamido-NAD(+) + NH4(+) + ATP = AMP + diphosphate + NAD(+) + H(+). It functions in the pathway cofactor biosynthesis; NAD(+) biosynthesis; NAD(+) from deamido-NAD(+) (ammonia route): step 1/1. Functionally, catalyzes the ATP-dependent amidation of deamido-NAD to form NAD. Uses ammonia as a nitrogen source. The polypeptide is NH(3)-dependent NAD(+) synthetase (Halobacterium salinarum (strain ATCC 29341 / DSM 671 / R1)).